The primary structure comprises 745 residues: 5-methyltetrahydropteroyltriglutamate--homocysteine methyltransferase (745 aa).

Residues 19–22 and Lys119 contribute to the 5-methyltetrahydropteroyltri-L-glutamate site; that span reads RELK. L-homocysteine-binding positions include 418–420 and Glu471; that span reads IGS. L-methionine-binding positions include 418–420 and Glu471; that span reads IGS. Residues 502-503 and Trp548 each bind 5-methyltetrahydropteroyltri-L-glutamate; that span reads RC. Asp586 is an L-homocysteine binding site. Asp586 serves as a coordination point for L-methionine. Glu592 provides a ligand contact to 5-methyltetrahydropteroyltri-L-glutamate. 3 residues coordinate Zn(2+): His628, Cys630, and Glu652. His681 serves as the catalytic Proton donor. Cys713 lines the Zn(2+) pocket.

The protein belongs to the vitamin-B12 independent methionine synthase family. It depends on Zn(2+) as a cofactor.

It carries out the reaction 5-methyltetrahydropteroyltri-L-glutamate + L-homocysteine = tetrahydropteroyltri-L-glutamate + L-methionine. Its pathway is amino-acid biosynthesis; L-methionine biosynthesis via de novo pathway; L-methionine from L-homocysteine (MetE route): step 1/1. Its function is as follows. Catalyzes the transfer of a methyl group from 5-methyltetrahydrofolate to homocysteine resulting in methionine formation. In Corynebacterium glutamicum (strain ATCC 13032 / DSM 20300 / JCM 1318 / BCRC 11384 / CCUG 27702 / LMG 3730 / NBRC 12168 / NCIMB 10025 / NRRL B-2784 / 534), this protein is 5-methyltetrahydropteroyltriglutamate--homocysteine methyltransferase.